The chain runs to 309 residues: ADP-L-glycero-D-manno-heptose-6-epimerase (309 aa).

NADP(+)-binding positions include 10–11, 31–32, Lys-38, Lys-53, 75–79, and Asn-92; these read FI, DN, and LGACS. Tyr-140 functions as the Proton acceptor in the catalytic mechanism. Lys-144 serves as a coordination point for NADP(+). A substrate-binding site is contributed by Asn-169. The NADP(+) site is built by Val-170 and Lys-178. Lys-178 serves as the catalytic Proton acceptor. Residues Ser-180, His-187, 201–204, Arg-209, and Tyr-272 each bind substrate; that span reads FLGS.

The protein belongs to the NAD(P)-dependent epimerase/dehydratase family. HldD subfamily. Homopentamer. NADP(+) is required as a cofactor.

It carries out the reaction ADP-D-glycero-beta-D-manno-heptose = ADP-L-glycero-beta-D-manno-heptose. Its pathway is nucleotide-sugar biosynthesis; ADP-L-glycero-beta-D-manno-heptose biosynthesis; ADP-L-glycero-beta-D-manno-heptose from D-glycero-beta-D-manno-heptose 7-phosphate: step 4/4. Its function is as follows. Catalyzes the interconversion between ADP-D-glycero-beta-D-manno-heptose and ADP-L-glycero-beta-D-manno-heptose via an epimerization at carbon 6 of the heptose. The polypeptide is ADP-L-glycero-D-manno-heptose-6-epimerase (Hamiltonella defensa subsp. Acyrthosiphon pisum (strain 5AT)).